The sequence spans 219 residues: Probable transcriptional regulator flp (219 aa).

The HTH crp-type domain maps to 144–212; sequence DSINVRLTHY…GKQVRILNAE (69 aa). Residues 191–210 constitute a DNA-binding region (H-T-H motif); that stretch reads KRLAEEKLIERSGKQVRILN.

The protein is Probable transcriptional regulator flp (flp) of Lacticaseibacillus casei (Lactobacillus casei).